We begin with the raw amino-acid sequence, 298 residues long: Max-like protein X (298 aa).

The interval 1-63 (MTEPGASPED…PRGCREDSSH (63 aa)) is disordered. S7 is subject to Phosphoserine. A compositionally biased stretch (basic residues) spans 28-37 (GRARARRGAG). Phosphoserine occurs at positions 45, 48, 74, 77, and 98. The disordered stretch occupies residues 91-145 (SVVSRANSIGSTSASSVPNTDDEDSDYHQEAYKESYKDRRRRAHTQAEQKRRDAI). A compositionally biased stretch (polar residues) spans 94–109 (SRANSIGSTSASSVPN). 2 stretches are compositionally biased toward basic and acidic residues: residues 116 to 127 (DYHQEAYKESYK) and 135 to 145 (TQAEQKRRDAI). One can recognise a bHLH domain in the interval 129 to 187 (RRRRAHTQAEQKRRDAIKRGYDDLQTIVPTCQQQDFSIGSQKLSKAIVLQKTIDYIQFL). The interval 140–160 (KRRDAIKRGYDDLQTIVPTCQ) is leucine-zipper.

In terms of assembly, efficient DNA binding requires dimerization with another bHLH protein. Binds DNA as a heterodimer with MAD1, MAD4, MNT, WBSCR14 and MLXIP. Can also bind DNA as a homodimer. In terms of tissue distribution, expressed in all tissues tested, including spleen, thymus, prostate, ovary, intestine, colon, peripheral blood leukocyte, heart, liver, skeletal muscle and kidney. Lower levels of expression in testis, brain, placenta and lung.

It is found in the cytoplasm. The protein localises to the nucleus. Its function is as follows. Transcription regulator. Forms a sequence-specific DNA-binding protein complex with MAD1, MAD4, MNT, WBSCR14 and MLXIP which recognizes the core sequence 5'-CACGTG-3'. The TCFL4-MAD1, TCFL4-MAD4, TCFL4-WBSCR14 complexes are transcriptional repressors. Plays a role in transcriptional activation of glycolytic target genes. Involved in glucose-responsive gene regulation. This is Max-like protein X (MLX) from Homo sapiens (Human).